The following is a 406-amino-acid chain: Tyrosine--tRNA ligase (406 aa).

An L-tyrosine-binding site is contributed by tyrosine 35. A 'HIGH' region motif is present at residues 40–49 (ATSASLHIGH). Positions 167 and 171 each coordinate L-tyrosine. Residues 227-231 (KMGKS) carry the 'KMSKS' region motif. Lysine 230 is a binding site for ATP. Positions 341–405 (ILLVDLMVLA…IGKKKILRIV (65 aa)) constitute an S4 RNA-binding domain.

This sequence belongs to the class-I aminoacyl-tRNA synthetase family. TyrS type 1 subfamily. As to quaternary structure, homodimer.

It localises to the cytoplasm. The catalysed reaction is tRNA(Tyr) + L-tyrosine + ATP = L-tyrosyl-tRNA(Tyr) + AMP + diphosphate + H(+). Catalyzes the attachment of tyrosine to tRNA(Tyr) in a two-step reaction: tyrosine is first activated by ATP to form Tyr-AMP and then transferred to the acceptor end of tRNA(Tyr). In Borrelia duttonii (strain Ly), this protein is Tyrosine--tRNA ligase.